We begin with the raw amino-acid sequence, 173 residues long: C-phycocyanin beta subunit (173 aa).

An N4-methylasparagine modification is found at N73. (2R,3E)-phycocyanobilin-binding residues include C83 and C154.

Belongs to the phycobiliprotein family. Heterodimer of an alpha and a beta subunit, which further assembles into trimers and the trimers into hexamers. Post-translationally, contains two covalently linked bilin chromophores.

Its subcellular location is the cellular thylakoid membrane. Functionally, light-harvesting photosynthetic bile pigment-protein from the phycobiliprotein complex (phycobilisome, PBS). Phycocyanin is the major phycobiliprotein in the PBS rod. The protein is C-phycocyanin beta subunit (cpcB1) of Synechococcus elongatus (strain ATCC 33912 / PCC 7942 / FACHB-805) (Anacystis nidulans R2).